We begin with the raw amino-acid sequence, 100 residues long: Integration host factor subunit alpha (100 aa).

Positions 50–70 are disordered; that stretch reads GNFQLRDKPQRPGRNPKTGEE.

The protein belongs to the bacterial histone-like protein family. Heterodimer of an alpha and a beta chain.

Functionally, this protein is one of the two subunits of integration host factor, a specific DNA-binding protein that functions in genetic recombination as well as in transcriptional and translational control. The polypeptide is Integration host factor subunit alpha (Chromobacterium violaceum (strain ATCC 12472 / DSM 30191 / JCM 1249 / CCUG 213 / NBRC 12614 / NCIMB 9131 / NCTC 9757 / MK)).